We begin with the raw amino-acid sequence, 120 residues long: Chaperonin GroEL (120 aa).

23–27 (DGTTT) contributes to the ATP binding site.

This sequence belongs to the chaperonin (HSP60) family. As to quaternary structure, forms a cylinder of 14 subunits composed of two heptameric rings stacked back-to-back. Interacts with the co-chaperonin GroES.

It is found in the cytoplasm. It catalyses the reaction ATP + H2O + a folded polypeptide = ADP + phosphate + an unfolded polypeptide.. Functionally, together with its co-chaperonin GroES, plays an essential role in assisting protein folding. The GroEL-GroES system forms a nano-cage that allows encapsulation of the non-native substrate proteins and provides a physical environment optimized to promote and accelerate protein folding. The sequence is that of Chaperonin GroEL from Mycolicibacterium pulveris (Mycobacterium pulveris).